Here is a 612-residue protein sequence, read N- to C-terminus: MALWFVLLWVSSLQYAEVEAFFDWLKKADPAPTPPPAESIVPILLHGEAPAFEMSVVDEKFLAEAKQMELSPLDSCHFRVVAQLKATCSGLSEEQLAKLGVALFNCQSEVEGRRTYPCTEEMSIKECTADMDSDTWNAYHIVSNRARSVCYATRQQHFRKRAELTVNALISTATSQLDAMKDLKEGQKELRDMTAASLDKLLEGHGALQIQQGALKEGQEQLDASISENLQRLAQEKALISTGQQLVAQLIQGITQRMENVSGQLKDQTAEVQEGHQAILEDLAVVRGSAQDIYEKMELNLNGFLQQQNTTAHFYTELMRKLELMNGTLGYMLTYLDNMQTRLEDRLHMIQGYLGWAGLSLRALWTCVMHAGYFLLCAVLLSFLQCTTFSRVTLLLSVPINAIAEINQQAALDLISLTLLLFTLSLGRWFVLQLLWALSKIKGRTCSRPPHLSIYPPKEKTPEKQHEFGEKCPASSSTPVQSDPVCDLEVESFMMGDPCVLGVSPSRCPPKFSHHHLGGTPNHSTPRLKSRHSIAATELDNIPQRNLGVFLETVNRSRSSSPNQSLASSSSFSGRSLCSGITRLGQPCKKRAVVGQDYCRVHEGGHTSYSRL.

The first 20 residues, 1-20, serve as a signal peptide directing secretion; sequence MALWFVLLWVSSLQYAEVEA. The next 2 membrane-spanning stretches (helical) occupy residues 364–384 and 417–437; these read LWTC…LSFL and LTLL…LLWA. Disordered stretches follow at residues 452–476 and 555–574; these read LSIY…PASS and NRSR…SFSG. Residues 457–470 are compositionally biased toward basic and acidic residues; it reads PKEKTPEKQHEFGE. Positions 556 to 574 are enriched in low complexity; the sequence is RSRSSSPNQSLASSSSFSG.

It localises to the nucleus membrane. Its function is as follows. Required for nuclear membrane fusion during karyogamy. This is Protein brambleberry (bmb) from Danio rerio (Zebrafish).